The primary structure comprises 416 residues: Antigen EG13 (416 aa).

Positions 1–247 (MIQERADIEK…TVAKVDADAD (247 aa)) constitute an F-BAR domain. Residues 297–327 (LKTFTSPDRGGPIPGTTDSGSNISTSPVHTT) are disordered. A compositionally biased stretch (polar residues) spans 312–327 (TTDSGSNISTSPVHTT). The SH3 domain occupies 361–416 (RPGVPIRALYDYVGVEADELSFNSGDLFEKLEDEDEQGWCKGRKDGRVGLYPRQLR).

The chain is Antigen EG13 (EG13) from Echinococcus granulosus (Hydatid tapeworm).